A 449-amino-acid chain; its full sequence is Intestinal acid phosphatase (449 aa).

The N-terminal stretch at M1 to T19 is a signal peptide. At Y20 to A428 the chain is on the extracellular side. H36 (nucleophile) is an active-site residue. D321 acts as the Proton donor in catalysis. Residues T429–F449 form a helical membrane-spanning segment.

This sequence belongs to the histidine acid phosphatase family. As to quaternary structure, homodimer. In terms of processing, the N-terminus is blocked. Expressed in the intestine, specifically on the edge of the gut lumen, in the 14 posterior cells of the intestine.

Its subcellular location is the membrane. It carries out the reaction a phosphate monoester + H2O = an alcohol + phosphate. Functionally, acid phosphatase required for normal growth and development. Specifically required for normal gut differentiation. The protein is Intestinal acid phosphatase of Caenorhabditis elegans.